Consider the following 309-residue polypeptide: Ras-like protein 1 (309 aa).

GTP is bound by residues 20 to 25 (GVGKSA), 36 to 42 (VDEYDPT), 66 to 67 (AG), 123 to 126 (NKLD), and 153 to 155 (SAK). Positions 39 to 47 (YDPTIEDSY) match the Effector region motif. The segment at 177–303 (KYNSMNRQLD…SANARKESSG (127 aa)) is disordered. Composition is skewed to polar residues over residues 179 to 188 (NSMNRQLDNT) and 209 to 235 (NGSY…NHNG). Residues 236-245 (ETTKRTDEKN) show a composition bias toward basic and acidic residues. Low complexity predominate over residues 246-256 (YVNQNNNNEGN). The segment covering 257–296 (TKYSSNGNGNRSDISRGNQNNALNSRSKQSAEPQKNSSAN) has biased composition (polar residues). Cys-305 carries the S-palmitoyl cysteine lipid modification. Position 306 is a cysteine methyl ester (Cys-306). Cys-306 is lipidated: S-farnesyl cysteine. Positions 307-309 (IIC) are cleaved as a propeptide — removed in mature form.

The protein belongs to the small GTPase superfamily. Ras family. Post-translationally, farnesylated by RAM1-RAM2, which is required for targeting RAS1 to the cytoplasmic site of the endoplasmic reticulum, where proteolytic processing of the C-terminus by RCE1 and methylation of the resulting carboxyl group by STE14 occurs. Palmitoylated by the ERF2-SHR5 complex, which is required for proper plasma membrane localization of RAS1.

It localises to the cell membrane. It catalyses the reaction GTP + H2O = GDP + phosphate + H(+). Alternates between an inactive form bound to GDP and an active form bound to GTP. Activated by guanine nucleotide-exchange factor (GEF) CDC25 and inactivated by GTPase-activating proteins (GAPs) IRA1 and IRA2. The S.cerevisiae Ras proteins modulate the activity of the adenylate cyclase catalytic subunit and therefore affect the biosynthesis of cyclic-AMP. In Saccharomyces cerevisiae (strain ATCC 204508 / S288c) (Baker's yeast), this protein is Ras-like protein 1 (RAS1).